A 320-amino-acid polypeptide reads, in one-letter code: MNLKAITLMQFDSNGRLRHLLTLEGLSRHTLLQLLDCAAQNCALGVDPMGKRNVLAGMAVCTLFFEPSTRTRHSFHLAAQRLGADVLNFDASMSSTSKGESACDTLKNLEAMGVRGFIVRHPEEIVIAQLAAVVGEGTVLINAGAGRSTHPTQGLLDMLTLCQAKGNDFSKLKLLFVGDIKHSRVARSNLHALRTLGAGQIRVCGPTALLPHDGLLSGCVVSQDFDAMLEGVDVLMMLRLQRERMEEGLVPSLEHYHANYGLTAARLARAAPDAVVLHPGPINRGVEITDEVADGPQSWILRQASNGVMVRMAVLETLLG.

2 residues coordinate carbamoyl phosphate: arginine 70 and threonine 71. L-aspartate is bound at residue lysine 98. Carbamoyl phosphate is bound by residues arginine 120, histidine 150, and glutamine 153. L-aspartate contacts are provided by arginine 184 and arginine 239. Carbamoyl phosphate is bound by residues glycine 280 and proline 281.

Belongs to the aspartate/ornithine carbamoyltransferase superfamily. ATCase family. As to quaternary structure, heterododecamer (2C3:3R2) of six catalytic PyrB chains organized as two trimers (C3), and six regulatory PyrI chains organized as three dimers (R2).

It catalyses the reaction carbamoyl phosphate + L-aspartate = N-carbamoyl-L-aspartate + phosphate + H(+). Its pathway is pyrimidine metabolism; UMP biosynthesis via de novo pathway; (S)-dihydroorotate from bicarbonate: step 2/3. In terms of biological role, catalyzes the condensation of carbamoyl phosphate and aspartate to form carbamoyl aspartate and inorganic phosphate, the committed step in the de novo pyrimidine nucleotide biosynthesis pathway. This chain is Aspartate carbamoyltransferase catalytic subunit, found in Xylella fastidiosa (strain Temecula1 / ATCC 700964).